Consider the following 350-residue polypeptide: Small ribosomal subunit biogenesis GTPase RsgA (350 aa).

The span at 1 to 17 (MSKNKLSKGQQRRVNAN) shows a compositional bias: polar residues. The interval 1 to 33 (MSKNKLSKGQQRRVNANHQRRLKTSKEKPDYDD) is disordered. Residues 104-273 (TSVLTRPDFY…VIDSPGVREF (170 aa)) enclose the CP-type G domain. GTP contacts are provided by residues 160 to 163 (NKID) and 214 to 222 (GQSGVGKSS). The Zn(2+) site is built by Cys-297, Cys-302, His-304, and Cys-310.

This sequence belongs to the TRAFAC class YlqF/YawG GTPase family. RsgA subfamily. In terms of assembly, monomer. Associates with 30S ribosomal subunit, binds 16S rRNA. Zn(2+) is required as a cofactor.

Its subcellular location is the cytoplasm. In terms of biological role, one of several proteins that assist in the late maturation steps of the functional core of the 30S ribosomal subunit. Helps release RbfA from mature subunits. May play a role in the assembly of ribosomal proteins into the subunit. Circularly permuted GTPase that catalyzes slow GTP hydrolysis, GTPase activity is stimulated by the 30S ribosomal subunit. This chain is Small ribosomal subunit biogenesis GTPase RsgA, found in Shigella boydii serotype 18 (strain CDC 3083-94 / BS512).